Reading from the N-terminus, the 831-residue chain is Probable basic-leucine zipper transcription factor P (831 aa).

Disordered stretches follow at residues 1 to 33 (MNHRIEDITSNPSSPSPNSPFSSPQVSLQPSII) and 54 to 166 (NITS…IASR). Positions 54–85 (NITSSPSTSSSPPISTTTTTTTTTTTTATAKK) are enriched in low complexity. Over residues 87-96 (NSKEKKKTTN) the composition is skewed to basic and acidic residues. Positions 97 to 129 (KDNNNNNNNNNSNNQQQQQQQQQQQQQQQQQQQ) are enriched in low complexity. Positions 101 to 141 (NNNNNNNSNNQQQQQQQQQQQQQQQQQQQYEEEDDDEEDEG) form a coiled coil. Positions 130 to 143 (YEEEDDDEEDEGGD) are enriched in acidic residues. Residues 144–154 (DNTKVGKGEKM) show a composition bias toward basic and acidic residues. In terms of domain architecture, bZIP spans 151–214 (GEKMKARRTN…LELLKFSQEV (64 aa)). Residues 153–173 (KMKARRTNQNIASRNYRQRKK) are basic motif. The tract at residues 176–183 (IKEMEDKI) is leucine-zipper. Low complexity-rich tracts occupy residues 469–484 (SSSSSSSSSSMSSSTS) and 497–510 (SSSNSSPSSLSASS). Disordered regions lie at residues 469–510 (SSSS…SASS), 658–697 (QQQAAQQQSPIQTQLSPPQHITPQHTPQQHIQQQQQHQNY), 715–771 (DATN…NTNK), and 787–810 (SLFSHQHQQQNSQSPTLPPSQNDS). Residues 601-664 (AQQHAQQQAQ…QAAQQQAAQQ (64 aa)) adopt a coiled-coil conformation. 3 stretches are compositionally biased toward low complexity: residues 674-695 (PPQHITPQHTPQQHIQQQQQHQ), 720-750 (NNNNNNNNNNNNNNNNNNNNNNNNNNNNNNN), and 787-800 (SLFSHQHQQQNSQS).

The protein belongs to the bZIP family.

The protein resides in the nucleus. Functionally, probable transcriptional regulator. This is Probable basic-leucine zipper transcription factor P (bzpP) from Dictyostelium discoideum (Social amoeba).